Here is a 409-residue protein sequence, read N- to C-terminus: uncharacterized protein (409 aa).

10 consecutive transmembrane segments (helical) span residues 53-73 (IITL…YVHC), 83-103 (WCYF…NVDG), 115-135 (LGEL…AIVM), 141-161 (IGPY…YLAH), 183-203 (VLFM…WTYG), 205-225 (STTV…VTCL), 243-263 (CLLQ…WASV), 265-285 (NLIT…FGYI), 299-319 (CSLF…SILA), and 329-349 (TVAL…FSYF). Residues 388–401 (EEGSSSIGNSTDDI) show a composition bias toward polar residues. The interval 388–409 (EEGSSSIGNSTDDINPSEIEEI) is disordered.

It belongs to the CDP-alcohol phosphatidyltransferase class-I family.

It localises to the membrane. This is an uncharacterized protein from Dictyostelium discoideum (Social amoeba).